Here is a 60-residue protein sequence, read N- to C-terminus: MDAISQSPVDVLLPKHILDIWAIVLIILATVVIMTSLFLCPATAVIIYRMRTHPVLNGAV.

Residues 20 to 40 (IWAIVLIILATVVIMTSLFLC) traverse the membrane as a helical segment.

It is found in the membrane. The polypeptide is Small integral membrane protein 3 (Smim3) (Rattus norvegicus (Rat)).